The sequence spans 123 residues: Large ribosomal subunit protein uL18 (123 aa).

It belongs to the universal ribosomal protein uL18 family. In terms of assembly, part of the 50S ribosomal subunit; part of the 5S rRNA/L5/L18/L25 subcomplex. Contacts the 5S and 23S rRNAs.

This is one of the proteins that bind and probably mediate the attachment of the 5S RNA into the large ribosomal subunit, where it forms part of the central protuberance. The polypeptide is Large ribosomal subunit protein uL18 (Chlamydia felis (strain Fe/C-56) (Chlamydophila felis)).